The following is a 155-amino-acid chain: Lipoprotein signal peptidase (155 aa).

2 helical membrane passes run 52-72 and 85-105; these read ILQG…AGIV and LGVA…DRVF. Active-site residues include aspartate 111 and aspartate 129. The helical transmembrane segment at 124-144 threads the bilayer; sequence IFNIADSSLCVGVILLFIQML.

It belongs to the peptidase A8 family.

The protein resides in the cell membrane. The catalysed reaction is Release of signal peptides from bacterial membrane prolipoproteins. Hydrolyzes -Xaa-Yaa-Zaa-|-(S,diacylglyceryl)Cys-, in which Xaa is hydrophobic (preferably Leu), and Yaa (Ala or Ser) and Zaa (Gly or Ala) have small, neutral side chains.. It functions in the pathway protein modification; lipoprotein biosynthesis (signal peptide cleavage). In terms of biological role, this protein specifically catalyzes the removal of signal peptides from prolipoproteins. This Bacillus pumilus (strain SAFR-032) protein is Lipoprotein signal peptidase.